We begin with the raw amino-acid sequence, 466 residues long: 3-isopropylmalate dehydratase large subunit 1 (466 aa).

Cys347, Cys407, and Cys410 together coordinate [4Fe-4S] cluster.

It belongs to the aconitase/IPM isomerase family. LeuC type 1 subfamily. Heterodimer of LeuC and LeuD. The cofactor is [4Fe-4S] cluster.

It carries out the reaction (2R,3S)-3-isopropylmalate = (2S)-2-isopropylmalate. It functions in the pathway amino-acid biosynthesis; L-leucine biosynthesis; L-leucine from 3-methyl-2-oxobutanoate: step 2/4. Catalyzes the isomerization between 2-isopropylmalate and 3-isopropylmalate, via the formation of 2-isopropylmaleate. The chain is 3-isopropylmalate dehydratase large subunit 1 from Salmonella choleraesuis (strain SC-B67).